Consider the following 110-residue polypeptide: Evasin P1166 (110 aa).

An N-terminal signal peptide occupies residues 1–24 (MEVKIFTLLQIALFIALGIHLVVA). Cystine bridges form between cysteine 45-cysteine 67, cysteine 49-cysteine 69, and cysteine 60-cysteine 80. N-linked (GlcNAc...) asparagine glycosylation is present at asparagine 48. Residues 89–110 (SEYPNPKSSEIDAAAPLPRETH) form a disordered region.

Its subcellular location is the secreted. Salivary chemokine-binding protein which binds to host chemokines CXCL1, CXCL2 and CXCL8. The polypeptide is Evasin P1166 (Ixodes ricinus (Common tick)).